Reading from the N-terminus, the 396-residue chain is CCA-adding enzyme (396 aa).

2 residues coordinate ATP: Gly-32 and Arg-35. The CTP site is built by Gly-32 and Arg-35. Mg(2+) is bound by residues Asp-45 and Asp-47. ATP contacts are provided by Arg-116, Asp-159, Arg-162, Arg-165, and Arg-168. Positions 116, 159, 162, 165, and 168 each coordinate CTP.

It belongs to the tRNA nucleotidyltransferase/poly(A) polymerase family. Bacterial CCA-adding enzyme type 3 subfamily. In terms of assembly, homodimer. Requires Mg(2+) as cofactor.

The catalysed reaction is a tRNA precursor + 2 CTP + ATP = a tRNA with a 3' CCA end + 3 diphosphate. The enzyme catalyses a tRNA with a 3' CCA end + 2 CTP + ATP = a tRNA with a 3' CCACCA end + 3 diphosphate. Functionally, catalyzes the addition and repair of the essential 3'-terminal CCA sequence in tRNAs without using a nucleic acid template. Adds these three nucleotides in the order of C, C, and A to the tRNA nucleotide-73, using CTP and ATP as substrates and producing inorganic pyrophosphate. tRNA 3'-terminal CCA addition is required both for tRNA processing and repair. Also involved in tRNA surveillance by mediating tandem CCA addition to generate a CCACCA at the 3' terminus of unstable tRNAs. While stable tRNAs receive only 3'-terminal CCA, unstable tRNAs are marked with CCACCA and rapidly degraded. This chain is CCA-adding enzyme, found in Lactobacillus delbrueckii subsp. bulgaricus (strain ATCC 11842 / DSM 20081 / BCRC 10696 / JCM 1002 / NBRC 13953 / NCIMB 11778 / NCTC 12712 / WDCM 00102 / Lb 14).